Consider the following 152-residue polypeptide: ALK and LTK ligand 2 (152 aa).

Positions methionine 1–glycine 24 are cleaved as a signal peptide. 2 disulfide bridges follow: cysteine 111–cysteine 147 and cysteine 125–cysteine 134.

Belongs to the ALKAL family. As to quaternary structure, homodimer; interchain disulfide bond is not required for homodimerization. As to expression, widely expressed with highest levels in adrenal gland and modest levels in pancreas, testis and uterus.

The protein localises to the secreted. Its subcellular location is the cell membrane. Its function is as follows. Cytokine that acts as a physiological ligand for receptor tyrosine kinases LTK and ALK, leading to their activation. Cytokine-binding is sufficient to activate LTK. In contrast, ALKAL2-driven activation of ALK is coupled with heparin-binding to ALK. Stimulation of ALK signaling is involved in neural development and regulation of energy expenditure. The chain is ALK and LTK ligand 2 from Homo sapiens (Human).